Here is a 635-residue protein sequence, read N- to C-terminus: Threonine--tRNA ligase (635 aa).

Residues M1 to T61 form the TGS domain. The catalytic stretch occupies residues D242–P533. Residues C333, H384, and H510 each coordinate Zn(2+).

The protein belongs to the class-II aminoacyl-tRNA synthetase family. As to quaternary structure, homodimer. The cofactor is Zn(2+).

It is found in the cytoplasm. It carries out the reaction tRNA(Thr) + L-threonine + ATP = L-threonyl-tRNA(Thr) + AMP + diphosphate + H(+). Catalyzes the attachment of threonine to tRNA(Thr) in a two-step reaction: L-threonine is first activated by ATP to form Thr-AMP and then transferred to the acceptor end of tRNA(Thr). Also edits incorrectly charged L-seryl-tRNA(Thr). The sequence is that of Threonine--tRNA ligase from Polaromonas sp. (strain JS666 / ATCC BAA-500).